Consider the following 214-residue polypeptide: 3-isopropylmalate dehydratase small subunit (214 aa).

The protein belongs to the LeuD family. LeuD type 1 subfamily. In terms of assembly, heterodimer of LeuC and LeuD.

It catalyses the reaction (2R,3S)-3-isopropylmalate = (2S)-2-isopropylmalate. It functions in the pathway amino-acid biosynthesis; L-leucine biosynthesis; L-leucine from 3-methyl-2-oxobutanoate: step 2/4. Catalyzes the isomerization between 2-isopropylmalate and 3-isopropylmalate, via the formation of 2-isopropylmaleate. The sequence is that of 3-isopropylmalate dehydratase small subunit from Nitrosococcus oceani (strain ATCC 19707 / BCRC 17464 / JCM 30415 / NCIMB 11848 / C-107).